A 187-amino-acid polypeptide reads, in one-letter code: UPF0340 protein stu1894 (187 aa).

It belongs to the UPF0340 family.

This is UPF0340 protein stu1894 from Streptococcus thermophilus (strain ATCC BAA-250 / LMG 18311).